The primary structure comprises 139 residues: Large ribosomal subunit protein uL16 (139 aa).

Residues 1-19 (MLIPRKVKHRKQHHPKRSG) are compositionally biased toward basic residues. A disordered region spans residues 1-22 (MLIPRKVKHRKQHHPKRSGVAK).

Belongs to the universal ribosomal protein uL16 family. Part of the 50S ribosomal subunit.

In terms of biological role, binds 23S rRNA and is also seen to make contacts with the A and possibly P site tRNAs. The sequence is that of Large ribosomal subunit protein uL16 from Acidothermus cellulolyticus (strain ATCC 43068 / DSM 8971 / 11B).